The following is an 883-amino-acid chain: Translation initiation factor IF-2 (883 aa).

Disordered regions lie at residues 52-102 (KGRD…VNVE) and 115-297 (VEAE…PTQP). Basic and acidic residues-rich tracts occupy residues 115–179 (VEAE…REAT) and 204–237 (AAEK…ERAA). Low complexity predominate over residues 239 to 248 (KTGATAPAAK). The segment covering 265–275 (PGRRGGKKGGR) has biased composition (basic residues). Residues 276 to 285 (RAASGGEAAK) are compositionally biased toward low complexity. Residues 383 to 550 (PRPPVVTVMG…AILLQAELME (168 aa)) form the tr-type G domain. A G1 region spans residues 392-399 (GHVDHGKT). A GTP-binding site is contributed by 392 to 399 (GHVDHGKT). Positions 417–421 (GITQH) are G2. The tract at residues 438–441 (DTPG) is G3. GTP is bound by residues 438 to 442 (DTPGH) and 492 to 495 (NKID). The tract at residues 492-495 (NKID) is G4. Residues 528-530 (SAK) form a G5 region.

Belongs to the TRAFAC class translation factor GTPase superfamily. Classic translation factor GTPase family. IF-2 subfamily.

The protein resides in the cytoplasm. In terms of biological role, one of the essential components for the initiation of protein synthesis. Protects formylmethionyl-tRNA from spontaneous hydrolysis and promotes its binding to the 30S ribosomal subunits. Also involved in the hydrolysis of GTP during the formation of the 70S ribosomal complex. The sequence is that of Translation initiation factor IF-2 from Alkalilimnicola ehrlichii (strain ATCC BAA-1101 / DSM 17681 / MLHE-1).